The chain runs to 143 residues: Ribosome-binding factor A (143 aa).

Residues 123-143 (DKSLQENYKQNDKETKAEKLR) form a disordered region.

This sequence belongs to the RbfA family. Monomer. Binds 30S ribosomal subunits, but not 50S ribosomal subunits or 70S ribosomes.

Its subcellular location is the cytoplasm. Its function is as follows. One of several proteins that assist in the late maturation steps of the functional core of the 30S ribosomal subunit. Associates with free 30S ribosomal subunits (but not with 30S subunits that are part of 70S ribosomes or polysomes). Required for efficient processing of 16S rRNA. May interact with the 5'-terminal helix region of 16S rRNA. The polypeptide is Ribosome-binding factor A (Francisella tularensis subsp. mediasiatica (strain FSC147)).